The sequence spans 75 residues: Pi-hexatoxin-Hi1a (75 aa).

6 cysteine pairs are disulfide-bonded: Cys-3–Cys-18, Cys-10–Cys-23, Cys-17–Cys-33, Cys-40–Cys-55, Cys-47–Cys-60, and Cys-54–Cys-71. Domain repeat units follow at residues 3–33 (CIRK…FEVC) and 40–71 (CLVK…SSVC). A 2 X approximate repeats with cysteine pattern C-C-CC-C-C region spans residues 3-71 (CIRKWLSCVD…KRSGNKSSVC (69 aa)).

The protein belongs to the psalmotoxin-1 family. Double-knot toxin subfamily. Expressed by the venom gland.

The protein resides in the secreted. Functionally, this toxin potently and selectively inhibits ASIC1a (IC(50)=0.4 nM on rASIC1a and IC(50)=0.52 nM on hASIC1a), an isoform of the gene ASIC1. It incompletely inhibits ASIC1a activation in a pH-independent and slowly reversible manner (Tau(off)=14.2 minutes for rASIC1a and 31.8 minutes for hASIC1a). This toxin acts by binding to and stabilizing the closed state of the channel, thereby impeding the transition into a conducting state. This toxin may bind to the acidic pocket of ASIC1a, since mutation of a key residue of this pocket (Arg-350) abolishes the ability of the toxin to inhibit ASIC1a. In addition, it shows antiparasitic activities, since it moderately inhibits the larval development of the major pathogenic nematode of ruminants (H.contortus, IC(50)=22.9 uM). In vivo, this toxin protects the brain from neuronal injury when administered up to 8 hours after stroke onset. The polypeptide is Pi-hexatoxin-Hi1a (Hadronyche infensa (Fraser island funnel-web spider)).